Consider the following 650-residue polypeptide: Acetyl-coenzyme A synthetase (650 aa).

Residues 191 to 194 (RGGR), threonine 311, and asparagine 335 each bind CoA. ATP-binding positions include 387–389 (GEP), 411–416 (DTWWQT), aspartate 500, and arginine 515. Residue serine 523 coordinates CoA. ATP is bound at residue arginine 526. 3 residues coordinate Mg(2+): valine 537, histidine 539, and valine 542. Arginine 584 lines the CoA pocket. N6-acetyllysine is present on lysine 609.

It belongs to the ATP-dependent AMP-binding enzyme family. It depends on Mg(2+) as a cofactor. Acetylated. Deacetylation by the SIR2-homolog deacetylase activates the enzyme.

The catalysed reaction is acetate + ATP + CoA = acetyl-CoA + AMP + diphosphate. Its function is as follows. Catalyzes the conversion of acetate into acetyl-CoA (AcCoA), an essential intermediate at the junction of anabolic and catabolic pathways. AcsA undergoes a two-step reaction. In the first half reaction, AcsA combines acetate with ATP to form acetyl-adenylate (AcAMP) intermediate. In the second half reaction, it can then transfer the acetyl group from AcAMP to the sulfhydryl group of CoA, forming the product AcCoA. This chain is Acetyl-coenzyme A synthetase, found in Shewanella frigidimarina (strain NCIMB 400).